The chain runs to 433 residues: Monodehydroascorbate reductase (433 aa).

Residues 12 to 15, Glu39, Arg46, Lys51, Ile94, and 145 to 146 contribute to the FAD site; these read GGVS and RE. NAD(+) contacts are provided by residues 170–176, Glu194, Arg200, and Gly259; that span reads GGYIGLE. Residue 172–176 participates in NADP(+) binding; the sequence is YIGLE. NADP(+) is bound by residues Arg200 and Gly259. Asp296 is an FAD binding site. 312–313 is an NAD(+) binding site; that stretch reads EH. 312-313 serves as a coordination point for NADP(+); sequence EH. Val314 is a binding site for FAD. Arg318 serves as a coordination point for L-ascorbate. Tyr347 contacts FAD. Tyr347 is an NAD(+) binding site. Tyr347 serves as a coordination point for NADP(+). Arg349 provides a ligand contact to L-ascorbate.

The protein belongs to the FAD-dependent oxidoreductase family. The cofactor is FAD. In terms of tissue distribution, expressed at relatively low levels in all tissues examined.

Its subcellular location is the cytoplasm. The catalysed reaction is 2 monodehydro-L-ascorbate radical + NADH + H(+) = 2 L-ascorbate + NAD(+). Catalyzes the conversion of monodehydroascorbate to ascorbate, oxidizing NADH in the process. The polypeptide is Monodehydroascorbate reductase (Pisum sativum (Garden pea)).